The following is a 449-amino-acid chain: uncharacterized protein (449 aa).

An N-terminal signal peptide occupies residues M1 to A20. The Extracellular segment spans residues A21 to T400. Residue N49 is glycosylated (N-linked (GlcNAc...) asparagine). 3 disordered regions span residues A72–G101, M154–S187, and Q215–Q381. Composition is skewed to low complexity over residues M154–G184 and Q215–S234. Polar residues-rich tracts occupy residues G255–N279 and T352–G367. A helical transmembrane segment spans residues L401–A421. Residues L422–M449 lie on the Cytoplasmic side of the membrane.

In terms of tissue distribution, highest expression in heart, placenta, liver, pancreas and colon. Also detected in brain, lung, skeletal muscle, kidney, spleen, prostate, testis, ovary and small intestine. Lowest expression in thymus and leukocytes.

The protein resides in the cell membrane. It localises to the golgi apparatus. Its subcellular location is the trans-Golgi network membrane. This is an uncharacterized protein from Homo sapiens (Human).